A 285-amino-acid chain; its full sequence is ATP synthase gamma chain (285 aa).

The protein belongs to the ATPase gamma chain family. In terms of assembly, F-type ATPases have 2 components, CF(1) - the catalytic core - and CF(0) - the membrane proton channel. CF(1) has five subunits: alpha(3), beta(3), gamma(1), delta(1), epsilon(1). CF(0) has three main subunits: a, b and c.

The protein localises to the cell membrane. In terms of biological role, produces ATP from ADP in the presence of a proton gradient across the membrane. The gamma chain is believed to be important in regulating ATPase activity and the flow of protons through the CF(0) complex. This is ATP synthase gamma chain from Clostridium novyi (strain NT).